Reading from the N-terminus, the 208-residue chain is 2-phospho-L-lactate guanylyltransferase (208 aa).

The protein belongs to the CofC family. Homodimer.

The catalysed reaction is (2S)-2-phospholactate + GTP + H(+) = (2S)-lactyl-2-diphospho-5'-guanosine + diphosphate. Its pathway is cofactor biosynthesis; coenzyme F420 biosynthesis. Guanylyltransferase that catalyzes the activation of (2S)-2-phospholactate (2-PL) as (2S)-lactyl-2-diphospho-5'-guanosine, via the condensation of 2-PL with GTP. It is involved in the biosynthesis of coenzyme F420, a hydride carrier cofactor. The protein is 2-phospho-L-lactate guanylyltransferase of Methanosarcina mazei (strain ATCC BAA-159 / DSM 3647 / Goe1 / Go1 / JCM 11833 / OCM 88) (Methanosarcina frisia).